Reading from the N-terminus, the 533-residue chain is GMP synthase [glutamine-hydrolyzing] (533 aa).

The Glutamine amidotransferase type-1 domain maps to 25–215 (SIVIFDFGSQ…VFNICKCHAN (191 aa)). The active-site Nucleophile is the Cys102. Active-site residues include His189 and Glu191. Positions 216-408 (WTMGNYIQES…LGLPDEMIWR (193 aa)) constitute a GMPS ATP-PPase domain. Residue 243-249 (SGGVDSA) participates in ATP binding.

Homodimer.

It carries out the reaction XMP + L-glutamine + ATP + H2O = GMP + L-glutamate + AMP + diphosphate + 2 H(+). It functions in the pathway purine metabolism; GMP biosynthesis; GMP from XMP (L-Gln route): step 1/1. Functionally, catalyzes the synthesis of GMP from XMP. This chain is GMP synthase [glutamine-hydrolyzing], found in Dehalococcoides mccartyi (strain CBDB1).